Here is a 208-residue protein sequence, read N- to C-terminus: Uracil phosphoribosyltransferase (208 aa).

Residues Arg78, Arg103, and 130-138 contribute to the 5-phospho-alpha-D-ribose 1-diphosphate site; that span reads DPMLATGGS. Uracil contacts are provided by residues Ile193 and 198 to 200; that span reads GDA. Residue Asp199 participates in 5-phospho-alpha-D-ribose 1-diphosphate binding.

Belongs to the UPRTase family. Mg(2+) is required as a cofactor.

The catalysed reaction is UMP + diphosphate = 5-phospho-alpha-D-ribose 1-diphosphate + uracil. It participates in pyrimidine metabolism; UMP biosynthesis via salvage pathway; UMP from uracil: step 1/1. With respect to regulation, allosterically activated by GTP. Catalyzes the conversion of uracil and 5-phospho-alpha-D-ribose 1-diphosphate (PRPP) to UMP and diphosphate. This Blochmanniella pennsylvanica (strain BPEN) protein is Uracil phosphoribosyltransferase.